Here is a 351-residue protein sequence, read N- to C-terminus: Mitogen-activated protein kinase 2 (351 aa).

The Protein kinase domain occupies 16–304 (YEILDVIGEG…AEEALQHNYL (289 aa)). ATP is bound by residues 22–30 (IGEGAYGIV) and K45. D140 (proton acceptor) is an active-site residue. At T176 the chain carries Phosphothreonine. The short motif at 176 to 178 (TEY) is the TXY element. Residue Y178 is modified to Phosphotyrosine.

Belongs to the protein kinase superfamily. CMGC Ser/Thr protein kinase family. MAP kinase subfamily. Mg(2+) serves as cofactor. The cofactor is Mn(2+). Post-translationally, dually phosphorylated on Thr-176 and Tyr-178, which activates the enzyme.

The protein localises to the nucleus. The catalysed reaction is L-seryl-[protein] + ATP = O-phospho-L-seryl-[protein] + ADP + H(+). The enzyme catalyses L-threonyl-[protein] + ATP = O-phospho-L-threonyl-[protein] + ADP + H(+). Its activity is regulated as follows. Activated by tyrosine and threonine phosphorylation. Inhibited by the MEK inhibitor U0126 but not by the p38 inhibitor SB203580. Cobalt abolishes kinase activity, while calcium, copper and nickel have little effect on kinase activity. Functionally, serine-threonine protein kinase which may be involved in pheromone signaling. Functionally complements the MAPK pheromone signaling pathway in S.cerevisiae. In Pneumocystis carinii, this protein is Mitogen-activated protein kinase 2.